The following is a 409-amino-acid chain: Arginine biosynthesis bifunctional protein ArgJ (409 aa).

T165, K191, T202, E282, N404, and T409 together coordinate substrate. Catalysis depends on T202, which acts as the Nucleophile.

Belongs to the ArgJ family. Heterotetramer of two alpha and two beta chains.

The protein resides in the cytoplasm. It carries out the reaction N(2)-acetyl-L-ornithine + L-glutamate = N-acetyl-L-glutamate + L-ornithine. The enzyme catalyses L-glutamate + acetyl-CoA = N-acetyl-L-glutamate + CoA + H(+). It participates in amino-acid biosynthesis; L-arginine biosynthesis; L-ornithine and N-acetyl-L-glutamate from L-glutamate and N(2)-acetyl-L-ornithine (cyclic): step 1/1. Its pathway is amino-acid biosynthesis; L-arginine biosynthesis; N(2)-acetyl-L-ornithine from L-glutamate: step 1/4. Catalyzes two activities which are involved in the cyclic version of arginine biosynthesis: the synthesis of N-acetylglutamate from glutamate and acetyl-CoA as the acetyl donor, and of ornithine by transacetylation between N(2)-acetylornithine and glutamate. In Parasynechococcus marenigrum (strain WH8102), this protein is Arginine biosynthesis bifunctional protein ArgJ.